The sequence spans 339 residues: Ferredoxin--NADP reductase (339 aa).

Residues E35, Q43, Y48, V88, F122, D287, and S327 each contribute to the FAD site.

It belongs to the ferredoxin--NADP reductase type 2 family. As to quaternary structure, homodimer. It depends on FAD as a cofactor.

It carries out the reaction 2 reduced [2Fe-2S]-[ferredoxin] + NADP(+) + H(+) = 2 oxidized [2Fe-2S]-[ferredoxin] + NADPH. The chain is Ferredoxin--NADP reductase from Leuconostoc citreum (strain KM20).